The primary structure comprises 689 residues: Glycine--tRNA ligase beta subunit (689 aa).

The protein belongs to the class-II aminoacyl-tRNA synthetase family. Tetramer of two alpha and two beta subunits.

It is found in the cytoplasm. It catalyses the reaction tRNA(Gly) + glycine + ATP = glycyl-tRNA(Gly) + AMP + diphosphate. This chain is Glycine--tRNA ligase beta subunit, found in Shewanella amazonensis (strain ATCC BAA-1098 / SB2B).